The sequence spans 431 residues: Cleavage stimulation factor subunit 1 (431 aa).

WD repeat units follow at residues 106–145, 171–210, 215–254, 260–301, 303–343, and 395–431; these read SHKG…AKSA, DHVD…AKRA, QEAE…CFVS, QHTD…TTFE, AHDG…TLVR, and GHNN…STTD.

In terms of assembly, homodimer. The CSTF complex is composed of CSTF1 (50 kDa subunit), CSTF2 (64 kDa subunit) and CSTF3 (77 kDa subunit). Interacts (via repeats WD) directly with CSTF3. Interacts (via repeat WD6) with BARD1. Interacts with ERCC6.

The protein resides in the nucleus. Functionally, one of the multiple factors required for polyadenylation and 3'-end cleavage of mammalian pre-mRNAs. May be responsible for the interaction of CSTF with other factors to form a stable complex on the pre-mRNA. The chain is Cleavage stimulation factor subunit 1 (Cstf1) from Mus musculus (Mouse).